Here is a 406-residue protein sequence, read N- to C-terminus: S-adenosylmethionine synthase (406 aa).

His-17 contacts ATP. Asp-19 provides a ligand contact to Mg(2+). Residue Glu-45 participates in K(+) binding. Positions 58 and 101 each coordinate L-methionine. Positions 101–111 (QSAEINQGVAR) are flexible loop. ATP is bound by residues 178-180 (DGK), Asp-258, 264-265 (RK), Ala-281, and Lys-285. Residue Asp-258 coordinates L-methionine. Lys-289 is an L-methionine binding site.

It belongs to the AdoMet synthase family. Homotetramer; dimer of dimers. Mg(2+) serves as cofactor. Requires K(+) as cofactor.

It localises to the cytoplasm. The catalysed reaction is L-methionine + ATP + H2O = S-adenosyl-L-methionine + phosphate + diphosphate. It participates in amino-acid biosynthesis; S-adenosyl-L-methionine biosynthesis; S-adenosyl-L-methionine from L-methionine: step 1/1. Functionally, catalyzes the formation of S-adenosylmethionine (AdoMet) from methionine and ATP. The overall synthetic reaction is composed of two sequential steps, AdoMet formation and the subsequent tripolyphosphate hydrolysis which occurs prior to release of AdoMet from the enzyme. The protein is S-adenosylmethionine synthase of Bifidobacterium longum subsp. infantis (strain ATCC 15697 / DSM 20088 / JCM 1222 / NCTC 11817 / S12).